Reading from the N-terminus, the 591-residue chain is Cytidine monophosphate-N-acetylneuraminic acid hydroxylase (591 aa).

The Rieske domain maps to 12-110; it reads LEAEDVRNLK…AVLSETDGSL (99 aa). [2Fe-2S] cluster-binding residues include C52, H54, C73, and H76.

The protein belongs to the CMP-Neu5Ac hydroxylase family. The cofactor is [2Fe-2S] cluster.

Its subcellular location is the cytoplasm. The catalysed reaction is CMP-N-acetyl-beta-neuraminate + 2 Fe(II)-[cytochrome b5] + O2 + 2 H(+) = CMP-N-glycoloyl-beta-neuraminate + 2 Fe(III)-[cytochrome b5] + H2O. Its pathway is amino-sugar metabolism; N-acetylneuraminate metabolism. Functionally, sialic acids are components of carbohydrate chains of glycoconjugates and are involved in cell-cell recognition and cell-pathogen interactions. Catalyzes the conversion of CMP-N-acetylneuraminic acid (CMP-Neu5Ac) into its hydroxylated derivative CMP-N-glycolylneuraminic acid (CMP-Neu5Gc), a sialic acid abundantly expressed at the surface of many cells. This chain is Cytidine monophosphate-N-acetylneuraminic acid hydroxylase (cmah), found in Danio rerio (Zebrafish).